The chain runs to 296 residues: Putative peptide transport system permease protein BruAb2_1032 (296 aa).

6 helical membrane-spanning segments follow: residues 35-55 (IGLV…WITN), 97-117 (LWIG…IGIA), 131-151 (VMDA…SAAL), 205-225 (ILPN…AYAI), 229-249 (ATLS…GSIV), and 260-280 (WWIM…INLI). An ABC transmembrane type-1 domain is found at 97–281 (LWIGLTVAVL…ISALAINLIG (185 aa)).

This sequence belongs to the binding-protein-dependent transport system permease family. In terms of assembly, the complex is composed of two ATP-binding proteins (BruAb2_1033 and BruAb2_1034), two transmembrane proteins (BruAb2_1031 and BruAb2_1032) and a solute-binding protein (BruAb2_1030).

It localises to the cell inner membrane. Functionally, probably part of an ABC transporter complex that could be involved in peptide import. Probably responsible for the translocation of the substrate across the membrane. The polypeptide is Putative peptide transport system permease protein BruAb2_1032 (Brucella abortus biovar 1 (strain 9-941)).